The chain runs to 579 residues: GPI alpha-1,2-mannosyltransferase 4 (579 aa).

8 helical membrane passes run 131-151 (LLLT…APPM), 156-173 (WNAL…VFYT), 180-200 (IEGL…TWGP), 216-236 (LGGI…FAVV), 258-278 (ALVL…TDSW), 369-389 (YLLL…HQEA), 391-411 (FLIP…QPVP), and 416-436 (VVLF…GGLV).

Belongs to the glycosyltransferase 22 family. PIGZ subfamily. Widely expressed at low level, with highest level in brain and colon.

The protein resides in the endoplasmic reticulum membrane. It functions in the pathway glycolipid biosynthesis; glycosylphosphatidylinositol-anchor biosynthesis. Alpha-1,2-mannosyltransferase that catalyzes the transfer of the fourth mannose, via an alpha-1,2 bond, from a dolichol-phosphate-mannose (Dol-P-Man) to an alpha-D-Man-(1-&gt;2)-alpha-D-Man-(1-&gt;6)-2-PEtn-alpha-D-Man-(1-&gt;4)-alpha-D-GlcN-(1-&gt;6)-(1-radyl,2-acyl-sn-glycero-3-phospho)-2-acyl-inositol (also termed H6) intermediate and participates in the twelfth step of the glycosylphosphatidylinositol-anchor biosynthesis. The presence of a fourth mannose in GPI is facultative, suggesting that it only exists in some tissues. In Homo sapiens (Human), this protein is GPI alpha-1,2-mannosyltransferase 4.